The following is a 172-amino-acid chain: Crossover junction endodeoxyribonuclease RuvC (172 aa).

Residues D11, E71, and D143 contribute to the active site. Residues D11, E71, and D143 each coordinate Mg(2+).

Belongs to the RuvC family. In terms of assembly, homodimer which binds Holliday junction (HJ) DNA. The HJ becomes 2-fold symmetrical on binding to RuvC with unstacked arms; it has a different conformation from HJ DNA in complex with RuvA. In the full resolvosome a probable DNA-RuvA(4)-RuvB(12)-RuvC(2) complex forms which resolves the HJ. It depends on Mg(2+) as a cofactor.

The protein localises to the cytoplasm. The enzyme catalyses Endonucleolytic cleavage at a junction such as a reciprocal single-stranded crossover between two homologous DNA duplexes (Holliday junction).. Its function is as follows. The RuvA-RuvB-RuvC complex processes Holliday junction (HJ) DNA during genetic recombination and DNA repair. Endonuclease that resolves HJ intermediates. Cleaves cruciform DNA by making single-stranded nicks across the HJ at symmetrical positions within the homologous arms, yielding a 5'-phosphate and a 3'-hydroxyl group; requires a central core of homology in the junction. The consensus cleavage sequence is 5'-(A/T)TT(C/G)-3'. Cleavage occurs on the 3'-side of the TT dinucleotide at the point of strand exchange. HJ branch migration catalyzed by RuvA-RuvB allows RuvC to scan DNA until it finds its consensus sequence, where it cleaves and resolves the cruciform DNA. The sequence is that of Crossover junction endodeoxyribonuclease RuvC from Brucella anthropi (strain ATCC 49188 / DSM 6882 / CCUG 24695 / JCM 21032 / LMG 3331 / NBRC 15819 / NCTC 12168 / Alc 37) (Ochrobactrum anthropi).